The primary structure comprises 114 residues: Iron-sulfur cluster insertion protein ErpA (114 aa).

Iron-sulfur cluster-binding residues include Cys-42, Cys-106, and Cys-108.

Belongs to the HesB/IscA family. In terms of assembly, homodimer. The cofactor is iron-sulfur cluster.

In terms of biological role, required for insertion of 4Fe-4S clusters for at least IspG. The polypeptide is Iron-sulfur cluster insertion protein ErpA (Haemophilus influenzae (strain PittGG)).